A 148-amino-acid polypeptide reads, in one-letter code: Extracellular globin-2B (148 aa).

Positions 3 to 148 constitute a Globin domain; it reads CCSAADRHEV…IADVIKAELP (146 aa). Residues cysteine 4 and cysteine 135 are joined by a disulfide bond. Residue histidine 98 coordinates heme b.

The protein belongs to the globin family. As to quaternary structure, disulfide bonded trimer of chains IIA, IIB, and IIC.

It is found in the secreted. In Tylorrhynchus heterochetus (Japanese palolo worm), this protein is Extracellular globin-2B.